The following is a 439-amino-acid chain: Alpha-1,3-mannosyl-glycoprotein 4-beta-N-acetylglucosaminyltransferase-like protein MGAT4E (439 aa).

It functions in the pathway protein modification; protein glycosylation. Glycosyltransferase-like protein that may participate in the transfer of N-acetylglucosamine (GlcNAc) to the core mannose residues of N-linked glycans. The sequence is that of Alpha-1,3-mannosyl-glycoprotein 4-beta-N-acetylglucosaminyltransferase-like protein MGAT4E from Mus musculus (Mouse).